Consider the following 550-residue polypeptide: Dipeptide-binding protein (550 aa).

Residues 1-22 (MKQAKIIGLSTVIALSGIILVA) form the signal peptide. Cys-23 carries the N-palmitoyl cysteine lipid modification. Cys-23 is lipidated: S-diacylglycerol cysteine.

It belongs to the bacterial solute-binding protein 5 family. As to quaternary structure, the complex is composed of two ATP-binding proteins (DppD and DppF), two transmembrane proteins (DppB and DppC) and a solute-binding protein (DppA).

Its subcellular location is the cell membrane. Part of the ABC transporter DppABCDF involved in dipeptide transport. Binds di- and tripeptides with high affinity. Requires a free N-terminal alpha-amino group and an alpha-peptide bound contiguous with the N-terminal amino group, has a strong selectivity for L-residues, and shows preference for dipeptides containing methionine or arginine, followed by hydrophobic tripeptides consisting of leucine or valine residues. This Lactococcus lactis subsp. cremoris (strain MG1363) protein is Dipeptide-binding protein.